The following is a 429-amino-acid chain: 3-phosphoshikimate 1-carboxyvinyltransferase (429 aa).

Positions 23, 24, and 28 each coordinate 3-phosphoshikimate. Lysine 23 is a phosphoenolpyruvate binding site. Residues glycine 95 and arginine 123 each contribute to the phosphoenolpyruvate site. 4 residues coordinate 3-phosphoshikimate: serine 168, glutamine 170, aspartate 316, and lysine 343. Glutamine 170 contributes to the phosphoenolpyruvate binding site. Aspartate 316 acts as the Proton acceptor in catalysis. Phosphoenolpyruvate-binding residues include arginine 347 and arginine 389.

The protein belongs to the EPSP synthase family. Monomer.

The protein resides in the cytoplasm. It catalyses the reaction 3-phosphoshikimate + phosphoenolpyruvate = 5-O-(1-carboxyvinyl)-3-phosphoshikimate + phosphate. It participates in metabolic intermediate biosynthesis; chorismate biosynthesis; chorismate from D-erythrose 4-phosphate and phosphoenolpyruvate: step 6/7. Its function is as follows. Catalyzes the transfer of the enolpyruvyl moiety of phosphoenolpyruvate (PEP) to the 5-hydroxyl of shikimate-3-phosphate (S3P) to produce enolpyruvyl shikimate-3-phosphate and inorganic phosphate. The sequence is that of 3-phosphoshikimate 1-carboxyvinyltransferase from Bacillus cereus (strain G9842).